Reading from the N-terminus, the 235-residue chain is Nucleoside diphosphate kinase 4, chloroplastic (235 aa).

The ATP site is built by Lys-93, Phe-141, Arg-169, Thr-175, Arg-186, and Asn-196. Catalysis depends on His-199, which acts as the Pros-phosphohistidine intermediate.

This sequence belongs to the NDK family. Homohexamer. The cofactor is Mg(2+).

The protein localises to the plastid. Its subcellular location is the chloroplast thylakoid lumen. It carries out the reaction a 2'-deoxyribonucleoside 5'-diphosphate + ATP = a 2'-deoxyribonucleoside 5'-triphosphate + ADP. It catalyses the reaction a ribonucleoside 5'-diphosphate + ATP = a ribonucleoside 5'-triphosphate + ADP. Major role in the synthesis of nucleoside triphosphates other than ATP. The ATP gamma phosphate is transferred to the NDP beta phosphate via a ping-pong mechanism, using a phosphorylated active-site intermediate. Shows the highest specificity towards GDP. The chain is Nucleoside diphosphate kinase 4, chloroplastic (NDK4) from Spinacia oleracea (Spinach).